The sequence spans 414 residues: Transmembrane protein 184A (414 aa).

Residues M1–S32 form a disordered region. The next 7 membrane-spanning stretches (helical) occupy residues V48–L68, L83–G103, F120–M140, L177–G197, L211–F231, F248–L268, and V290–L310. 2 disordered regions span residues T323–E342 and Y364–L414. Polar residues predominate over residues S379–H388.

It belongs to the TMEM184 family. As to expression, expressed in vascular cells (at protein level).

It localises to the cell membrane. Its subcellular location is the cytoplasm. It is found in the perinuclear region. The protein localises to the cytoplasmic vesicle membrane. The protein resides in the early endosome membrane. It localises to the endosome. Its subcellular location is the cytoplasmic vesicle. It is found in the secretory vesicle membrane. In terms of biological role, acts as a heparin receptor in vascular cells. May be involved in vesicle transport in exocrine cells and Sertoli cells. This Bos taurus (Bovine) protein is Transmembrane protein 184A (TMEM184A).